The sequence spans 63 residues: Cecropin-2 (63 aa).

The first 23 residues, methionine 1 to alanine 23, serve as a signal peptide directing secretion. The residue at position 62 (arginine 62) is an Arginine amide.

Belongs to the cecropin family.

It localises to the secreted. Its function is as follows. Cecropins have lytic and antibacterial activity against several Gram-positive and Gram-negative bacteria. This is Cecropin-2 (Cec2A) from Drosophila virilis (Fruit fly).